The primary structure comprises 365 residues: MSKPAVKSVQSATAKTATRAVNIRQKVKAPKQAKPEGKGSTKPVKDRPRVEIKKALHPRNAHLNGYDFPALISAFPRLKTFVRPTPYGALSIDFADPLAVKTLNAALLKHHYGIGAWDIPQGALCPPIPGRVDYVHYVADLLAEGDKSCAISKARVLDIGTGANGIYPILGSQVYGWQFVASDISAHSLTNVQSIIEQNPALQGRISLRLQPDDKAVFKGIVQPEERFELTLCNPPFHASMAEASEGTKRKVNNLQLNRGSSVKAAPKLNFGGQAAELWCQGGERQFLATMIRESQMFADQCLWFTSLVSKQENLKPCYQALAQLKVDTVKTIEMQQGNKITRVLAWSFQSAAKRKLWRAEHLAR.

The interval 1 to 48 (MSKPAVKSVQSATAKTATRAVNIRQKVKAPKQAKPEGKGSTKPVKDRP) is disordered. A compositionally biased stretch (basic and acidic residues) spans 33 to 48 (AKPEGKGSTKPVKDRP).

Belongs to the methyltransferase superfamily. METTL16/RlmF family.

The protein resides in the cytoplasm. The enzyme catalyses adenosine(1618) in 23S rRNA + S-adenosyl-L-methionine = N(6)-methyladenosine(1618) in 23S rRNA + S-adenosyl-L-homocysteine + H(+). Functionally, specifically methylates the adenine in position 1618 of 23S rRNA. This is Ribosomal RNA large subunit methyltransferase F from Shewanella baltica (strain OS223).